A 160-amino-acid polypeptide reads, in one-letter code: Putative NrdI-like protein (160 aa).

The protein belongs to the NrdI family.

The sequence is that of Putative NrdI-like protein from Streptococcus pyogenes serotype M1.